Consider the following 364-residue polypeptide: Methylthioribose-1-phosphate isomerase (364 aa).

Residues 53 to 55 (RGA), Arg90, and Gln203 each bind substrate. Catalysis depends on Asp244, which acts as the Proton donor. 254–255 (NK) contacts substrate.

Belongs to the eIF-2B alpha/beta/delta subunits family. MtnA subfamily.

The catalysed reaction is 5-(methylsulfanyl)-alpha-D-ribose 1-phosphate = 5-(methylsulfanyl)-D-ribulose 1-phosphate. The protein operates within amino-acid biosynthesis; L-methionine biosynthesis via salvage pathway; L-methionine from S-methyl-5-thio-alpha-D-ribose 1-phosphate: step 1/6. Its function is as follows. Catalyzes the interconversion of methylthioribose-1-phosphate (MTR-1-P) into methylthioribulose-1-phosphate (MTRu-1-P). The polypeptide is Methylthioribose-1-phosphate isomerase (Sinorhizobium medicae (strain WSM419) (Ensifer medicae)).